We begin with the raw amino-acid sequence, 298 residues long: Aspartate carbamoyltransferase catalytic subunit (298 aa).

Carbamoyl phosphate-binding residues include R50 and T51. Position 79 (K79) interacts with L-aspartate. R100, H128, and Q131 together coordinate carbamoyl phosphate. The L-aspartate site is built by R161 and R220. L259 and P260 together coordinate carbamoyl phosphate.

Belongs to the aspartate/ornithine carbamoyltransferase superfamily. ATCase family. As to quaternary structure, heterooligomer of catalytic and regulatory chains.

The catalysed reaction is carbamoyl phosphate + L-aspartate = N-carbamoyl-L-aspartate + phosphate + H(+). It functions in the pathway pyrimidine metabolism; UMP biosynthesis via de novo pathway; (S)-dihydroorotate from bicarbonate: step 2/3. Its function is as follows. Catalyzes the condensation of carbamoyl phosphate and aspartate to form carbamoyl aspartate and inorganic phosphate, the committed step in the de novo pyrimidine nucleotide biosynthesis pathway. In Sulfurisphaera tokodaii (strain DSM 16993 / JCM 10545 / NBRC 100140 / 7) (Sulfolobus tokodaii), this protein is Aspartate carbamoyltransferase catalytic subunit.